Consider the following 370-residue polypeptide: Coiled-coil domain-containing protein 89 (370 aa).

A disordered region spans residues 1 to 21 (MPQEEKTLRMDTPPPDEILGK). The residue at position 12 (Thr12) is a Phosphothreonine. A coiled-coil region spans residues 36 to 346 (KEMDGLREAL…YDELRLQSEA (311 aa)).

It belongs to the CCDC89 family. In terms of assembly, interacts with HEY1. As to expression, expression is restricted to the adult testis, where localization is almost exclusive to round spermatids.

The protein localises to the cytoplasm. The protein resides in the nucleus. The chain is Coiled-coil domain-containing protein 89 from Mus musculus (Mouse).